The primary structure comprises 493 residues: Cytochrome c-552 (493 aa).

Residues 1–25 (MEKKLKSWQGWLLFCGAMAVVFVLG) form the signal peptide. His-116 serves as a coordination point for heme c. Heme-binding residues include Cys-144, Cys-147, and Lys-148. Heme c-binding residues include Cys-182, Cys-185, His-186, Cys-224, Cys-227, and His-228. The Ca(2+) site is built by Glu-230, Tyr-231, Lys-276, and Gln-278. Substrate is bound at residue Tyr-231. Position 279 (His-279) interacts with substrate. His-290, Cys-297, Cys-300, His-301, His-315, Cys-328, Cys-331, His-332, and His-407 together coordinate heme c.

The protein belongs to the cytochrome c-552 family. Ca(2+) serves as cofactor. Heme c is required as a cofactor.

The protein localises to the periplasm. It carries out the reaction 6 Fe(III)-[cytochrome c] + NH4(+) + 2 H2O = 6 Fe(II)-[cytochrome c] + nitrite + 8 H(+). It participates in nitrogen metabolism; nitrate reduction (assimilation). Its function is as follows. Catalyzes the reduction of nitrite to ammonia, consuming six electrons in the process. The chain is Cytochrome c-552 from Bacteroides fragilis (strain ATCC 25285 / DSM 2151 / CCUG 4856 / JCM 11019 / LMG 10263 / NCTC 9343 / Onslow / VPI 2553 / EN-2).